We begin with the raw amino-acid sequence, 41 residues long: Cytochrome b559 subunit beta (41 aa).

Residues 16–32 (WLAVHALAVPTVFFLGS) traverse the membrane as a helical segment. H20 contributes to the heme binding site.

Belongs to the PsbE/PsbF family. Heterodimer of an alpha subunit and a beta subunit. PSII is composed of 1 copy each of membrane proteins PsbA, PsbB, PsbC, PsbD, PsbE, PsbF, PsbH, PsbI, PsbJ, PsbK, PsbL, PsbM, PsbT, PsbX, PsbY, PsbZ, Psb30/Ycf12, at least 3 peripheral proteins of the oxygen-evolving complex and a large number of cofactors. It forms dimeric complexes. The cofactor is heme b.

It is found in the plastid. Its subcellular location is the chloroplast thylakoid membrane. In terms of biological role, this b-type cytochrome is tightly associated with the reaction center of photosystem II (PSII). PSII is a light-driven water:plastoquinone oxidoreductase that uses light energy to abstract electrons from H(2)O, generating O(2) and a proton gradient subsequently used for ATP formation. It consists of a core antenna complex that captures photons, and an electron transfer chain that converts photonic excitation into a charge separation. The polypeptide is Cytochrome b559 subunit beta (Nephroselmis olivacea (Green alga)).